A 106-amino-acid chain; its full sequence is Nucleoid-associated protein DIP0260 (106 aa).

It belongs to the YbaB/EbfC family. In terms of assembly, homodimer.

It localises to the cytoplasm. The protein localises to the nucleoid. Its function is as follows. Binds to DNA and alters its conformation. May be involved in regulation of gene expression, nucleoid organization and DNA protection. The chain is Nucleoid-associated protein DIP0260 from Corynebacterium diphtheriae (strain ATCC 700971 / NCTC 13129 / Biotype gravis).